The chain runs to 223 residues: Glutathione S-transferase alpha I (223 aa).

Met-1 carries the N-acetylmethionine modification. Ala-2 is subject to N-acetylalanine; in Glutathione S-transferase alpha I, N-terminally processed. One can recognise a GST N-terminal domain in the interval Arg-3–Gly-83. Position 4 is an N6-succinyllysine (Lys-4). Glutathione is bound by residues Tyr-9, Arg-45, Gln-54 to Val-55, and Gln-67 to Thr-68. The 124-residue stretch at Asp-85–Met-208 folds into the GST C-terminal domain.

This sequence belongs to the GST superfamily. Alpha family. In terms of assembly, homodimer or heterodimer of GSTA1 and GSTA2. In terms of tissue distribution, liver and lung.

Its subcellular location is the cytoplasm. The catalysed reaction is RX + glutathione = an S-substituted glutathione + a halide anion + H(+). It catalyses the reaction prostaglandin A2 + glutathione = prostaglandin A2-S-(R)-glutathione. The enzyme catalyses prostaglandin J2 + glutathione = prostaglandin J2-S-(R)-glutathione. It carries out the reaction (13S)-hydroperoxy-(9Z,11E)-octadecadienoate + 2 glutathione = (13S)-hydroxy-(9Z,11E)-octadecadienoate + glutathione disulfide + H2O. The catalysed reaction is androst-5-ene-3,17-dione = androst-4-ene-3,17-dione. In terms of biological role, glutathione S-transferase that catalyzes the nucleophilic attack of the sulfur atom of glutathione on the electrophilic groups of a wide range of exogenous and endogenous compounds. Involved in the formation of glutathione conjugates of both prostaglandin A2 (PGA2) and prostaglandin J2 (PGJ2). It also catalyzes the isomerization of D5-androstene-3,17-dione (AD) into D4-androstene-3,17-dione and may therefore play an important role in hormone biosynthesis. Through its glutathione-dependent peroxidase activity toward the fatty acid hydroperoxide (13S)-hydroperoxy-(9Z,11E)-octadecadienoate/13-HPODE it is also involved in the metabolism of oxidized linoleic acid. The polypeptide is Glutathione S-transferase alpha I (Oryctolagus cuniculus (Rabbit)).